Consider the following 185-residue polypeptide: Transcription factor E (185 aa).

Residues 5–88 (KNKELLEIAQ…YWRLETKKLP (84 aa)) enclose the HTH TFE/IIEalpha-type domain.

It belongs to the TFE family. As to quaternary structure, monomer. Interaction with RNA polymerase subunits RpoF and RpoE is necessary for Tfe stimulatory transcription activity. Able to interact with Tbp and RNA polymerase in the absence of DNA promoter. Interacts both with the preinitiation and elongation complexes.

Transcription factor that plays a role in the activation of archaeal genes transcribed by RNA polymerase. Facilitates transcription initiation by enhancing TATA-box recognition by TATA-box-binding protein (Tbp), and transcription factor B (Tfb) and RNA polymerase recruitment. Not absolutely required for transcription in vitro, but particularly important in cases where Tbp or Tfb function is not optimal. It dynamically alters the nucleic acid-binding properties of RNA polymerases by stabilizing the initiation complex and destabilizing elongation complexes. Seems to translocate with the RNA polymerase following initiation and acts by binding to the non template strand of the transcription bubble in elongation complexes. The chain is Transcription factor E from Thermococcus kodakarensis (strain ATCC BAA-918 / JCM 12380 / KOD1) (Pyrococcus kodakaraensis (strain KOD1)).